The following is a 109-amino-acid chain: Large ribosomal subunit protein uL22 (109 aa).

Belongs to the universal ribosomal protein uL22 family. As to quaternary structure, part of the 50S ribosomal subunit.

Its function is as follows. This protein binds specifically to 23S rRNA; its binding is stimulated by other ribosomal proteins, e.g. L4, L17, and L20. It is important during the early stages of 50S assembly. It makes multiple contacts with different domains of the 23S rRNA in the assembled 50S subunit and ribosome. The globular domain of the protein is located near the polypeptide exit tunnel on the outside of the subunit, while an extended beta-hairpin is found that lines the wall of the exit tunnel in the center of the 70S ribosome. This Paraburkholderia phymatum (strain DSM 17167 / CIP 108236 / LMG 21445 / STM815) (Burkholderia phymatum) protein is Large ribosomal subunit protein uL22.